We begin with the raw amino-acid sequence, 450 residues long: MRADLAVSYGEERLPRYTSYPTAPHFSPVIDAGTYARWLSELPAGASASLYLHVPFCREMCWYCGCHTQIVRRDDLIAAYQRTLRSEIALVAETIGRRIKVEHIHFGGGTPTIMAPEAFAELMAAMRQAFFVLPSAEIAVEIDPRTLTADMVEAMRLSGVNRASLGVQSFDPIVQRAINRIQSFEQTAAVVDMLRHAGIAGINFDLIYGLPHQTVASCLDTVRRSLLLAPDRFSVFGYAHVPDFKKHQRMINQGALPDGPARHDQACAIANALKEAGYVQIGLDHFARPDDSMAVAFEERTLRRNFQGYTTDQGEVLLGFGASAIGHLPQGYVQNEVQIGAYAQSIGASRLATAKGYGLTDDDRLRADIIERIMCEFSADLGDICARHGAEPEAMLKSASRLKPLISDGVVRLDGDRLAVANDSRFLVRSVAAAFDAHLDPGKQLHSRAV.

The Radical SAM core domain occupies 42–276; sequence LPAGASASLY…CAIANALKEA (235 aa). Tyr-51 contributes to the S-adenosyl-L-methionine binding site. The [4Fe-4S] cluster site is built by Cys-57 and Cys-61. Tyr-63 contacts S-adenosyl-L-methionine. Residue Cys-64 coordinates [4Fe-4S] cluster. Residues Gly-108, 109–110, Glu-141, Gln-168, Arg-180, Asp-205, Ala-239, and Ile-325 contribute to the S-adenosyl-L-methionine site; that span reads GT.

It belongs to the anaerobic coproporphyrinogen-III oxidase family. Monomer. It depends on [4Fe-4S] cluster as a cofactor.

The protein resides in the cytoplasm. The enzyme catalyses coproporphyrinogen III + 2 S-adenosyl-L-methionine = protoporphyrinogen IX + 2 5'-deoxyadenosine + 2 L-methionine + 2 CO2. Its pathway is porphyrin-containing compound metabolism; protoporphyrin-IX biosynthesis; protoporphyrinogen-IX from coproporphyrinogen-III (AdoMet route): step 1/1. Functionally, involved in the heme biosynthesis. Catalyzes the anaerobic oxidative decarboxylation of propionate groups of rings A and B of coproporphyrinogen III to yield the vinyl groups in protoporphyrinogen IX. The protein is Oxygen-independent coproporphyrinogen III oxidase (hemN) of Bradyrhizobium diazoefficiens (strain JCM 10833 / BCRC 13528 / IAM 13628 / NBRC 14792 / USDA 110).